A 481-amino-acid chain; its full sequence is Proline--tRNA ligase 2 (481 aa).

It belongs to the class-II aminoacyl-tRNA synthetase family. ProS type 3 subfamily. Homodimer.

The protein resides in the cytoplasm. The catalysed reaction is tRNA(Pro) + L-proline + ATP = L-prolyl-tRNA(Pro) + AMP + diphosphate. Its function is as follows. Catalyzes the attachment of proline to tRNA(Pro) in a two-step reaction: proline is first activated by ATP to form Pro-AMP and then transferred to the acceptor end of tRNA(Pro). In Clostridioides difficile (strain 630) (Peptoclostridium difficile), this protein is Proline--tRNA ligase 2.